Consider the following 394-residue polypeptide: Chaperone protein DnaJ (394 aa).

Residues 6 to 71 (DYYEVLEVTK…DKRARYDQFG (66 aa)) enclose the J domain. The segment at 152–234 (GVEKKFKLKK…CGGEGIEYGE (83 aa)) adopts a CR-type zinc-finger fold. Zn(2+)-binding residues include cysteine 165, cysteine 168, cysteine 182, cysteine 185, cysteine 208, cysteine 211, cysteine 222, and cysteine 225. 4 CXXCXGXG motif repeats span residues 165–172 (CSHCHGTG), 182–189 (CPTCKGSG), 208–215 (CPTCNGEG), and 222–229 (CKVCGGEG).

This sequence belongs to the DnaJ family. Homodimer. The cofactor is Zn(2+).

It is found in the cytoplasm. Functionally, participates actively in the response to hyperosmotic and heat shock by preventing the aggregation of stress-denatured proteins and by disaggregating proteins, also in an autonomous, DnaK-independent fashion. Unfolded proteins bind initially to DnaJ; upon interaction with the DnaJ-bound protein, DnaK hydrolyzes its bound ATP, resulting in the formation of a stable complex. GrpE releases ADP from DnaK; ATP binding to DnaK triggers the release of the substrate protein, thus completing the reaction cycle. Several rounds of ATP-dependent interactions between DnaJ, DnaK and GrpE are required for fully efficient folding. Also involved, together with DnaK and GrpE, in the DNA replication of plasmids through activation of initiation proteins. This is Chaperone protein DnaJ from Bacteroides fragilis (strain YCH46).